A 466-amino-acid chain; its full sequence is Soluble pyridine nucleotide transhydrogenase (466 aa).

36 to 45 lines the FAD pocket; it reads EKESSVGGGC.

This sequence belongs to the class-I pyridine nucleotide-disulfide oxidoreductase family. The cofactor is FAD.

The protein resides in the cytoplasm. The enzyme catalyses NAD(+) + NADPH = NADH + NADP(+). In terms of biological role, conversion of NADPH, generated by peripheral catabolic pathways, to NADH, which can enter the respiratory chain for energy generation. In Vibrio atlanticus (strain LGP32) (Vibrio splendidus (strain Mel32)), this protein is Soluble pyridine nucleotide transhydrogenase.